We begin with the raw amino-acid sequence, 440 residues long: NADH-quinone oxidoreductase subunit H (440 aa).

9 helical membrane passes run 11 to 31 (VWLIIVKVVILFVILLAWTIF), 83 to 103 (IVFNLAPVIAGIACFASWSVI), 123 to 143 (VPVAVLFILAVASIGIYGVVL), 164 to 184 (MISYEVAMGLSLVTVFIFSGS), 207 to 227 (IAGHYWLLLIPSFVIYVITMF), 261 to 281 (FLAEYINMATLSAVCTTLFLG), 299 to 319 (WWGLLWFFLKTQLVIFFFVWV), 331 to 351 (FMDLGWKVLIPVSLGWVLLVA), and 366 to 386 (VFLVVVGVILVALIVWAFMGG).

It belongs to the complex I subunit 1 family. In terms of assembly, NDH-1 is composed of 14 different subunits. Subunits NuoA, H, J, K, L, M, N constitute the membrane sector of the complex.

The protein localises to the cell membrane. The catalysed reaction is a quinone + NADH + 5 H(+)(in) = a quinol + NAD(+) + 4 H(+)(out). NDH-1 shuttles electrons from NADH, via FMN and iron-sulfur (Fe-S) centers, to quinones in the respiratory chain. The immediate electron acceptor for the enzyme in this species is believed to be ubiquinone. Couples the redox reaction to proton translocation (for every two electrons transferred, four hydrogen ions are translocated across the cytoplasmic membrane), and thus conserves the redox energy in a proton gradient. This subunit may bind ubiquinone. This is NADH-quinone oxidoreductase subunit H from Cutibacterium acnes (strain DSM 16379 / KPA171202) (Propionibacterium acnes).